We begin with the raw amino-acid sequence, 150 residues long: Transcription antitermination protein NusB (150 aa).

This sequence belongs to the NusB family.

In terms of biological role, involved in transcription antitermination. Required for transcription of ribosomal RNA (rRNA) genes. Binds specifically to the boxA antiterminator sequence of the ribosomal RNA (rrn) operons. In Streptococcus equi subsp. zooepidemicus (strain H70), this protein is Transcription antitermination protein NusB.